A 471-amino-acid chain; its full sequence is Trigger factor (471 aa).

In terms of domain architecture, PPIase FKBP-type spans 162–243; that stretch reads GDFVVMDLVA…VSQVQEQELP (82 aa). A disordered region spans residues 436–471; that stretch reads LRPDGTIGEPEDEIEAETEIEIEPAAETDTEADTEQ. Residues 444 to 471 are compositionally biased toward acidic residues; it reads EPEDEIEAETEIEIEPAAETDTEADTEQ.

Belongs to the FKBP-type PPIase family. Tig subfamily.

It localises to the cytoplasm. It carries out the reaction [protein]-peptidylproline (omega=180) = [protein]-peptidylproline (omega=0). In terms of biological role, involved in protein export. Acts as a chaperone by maintaining the newly synthesized protein in an open conformation. Functions as a peptidyl-prolyl cis-trans isomerase. This chain is Trigger factor, found in Nocardioides sp. (strain ATCC BAA-499 / JS614).